A 454-amino-acid chain; its full sequence is Asparagine--tRNA ligase (454 aa).

This sequence belongs to the class-II aminoacyl-tRNA synthetase family. As to quaternary structure, homodimer.

It localises to the cytoplasm. It carries out the reaction tRNA(Asn) + L-asparagine + ATP = L-asparaginyl-tRNA(Asn) + AMP + diphosphate + H(+). The protein is Asparagine--tRNA ligase of Mesoplasma florum (strain ATCC 33453 / NBRC 100688 / NCTC 11704 / L1) (Acholeplasma florum).